Reading from the N-terminus, the 461-residue chain is tRNA modification GTPase MnmE (461 aa).

3 residues coordinate (6S)-5-formyl-5,6,7,8-tetrahydrofolate: Arg-22, Glu-87, and Arg-126. A TrmE-type G domain is found at 222-382; the sequence is GLKTVIVGKP…LEETIFNMVV (161 aa). Asn-232 is a K(+) binding site. GTP is bound by residues 232–237, 251–257, and 276–279; these read NVGKSS, TDIPGTT, and DTAG. Ser-236 is a Mg(2+) binding site. The K(+) site is built by Thr-251, Ile-253, and Thr-256. Thr-257 is a binding site for Mg(2+). A (6S)-5-formyl-5,6,7,8-tetrahydrofolate-binding site is contributed by Lys-461.

It belongs to the TRAFAC class TrmE-Era-EngA-EngB-Septin-like GTPase superfamily. TrmE GTPase family. Homodimer. Heterotetramer of two MnmE and two MnmG subunits. K(+) is required as a cofactor.

It localises to the cytoplasm. Functionally, exhibits a very high intrinsic GTPase hydrolysis rate. Involved in the addition of a carboxymethylaminomethyl (cmnm) group at the wobble position (U34) of certain tRNAs, forming tRNA-cmnm(5)s(2)U34. The protein is tRNA modification GTPase MnmE of Desulforamulus reducens (strain ATCC BAA-1160 / DSM 100696 / MI-1) (Desulfotomaculum reducens).